A 155-amino-acid polypeptide reads, in one-letter code: Ribosome maturation factor RimP (155 aa).

It belongs to the RimP family.

Its subcellular location is the cytoplasm. In terms of biological role, required for maturation of 30S ribosomal subunits. The chain is Ribosome maturation factor RimP from Synechococcus sp. (strain CC9902).